The following is a 170-amino-acid chain: Ribosome maturation factor RimM (170 aa).

In terms of domain architecture, PRC barrel spans 93 to 165 (PDEFHDHELI…RVVIDPPPGL (73 aa)).

It belongs to the RimM family. As to quaternary structure, binds ribosomal protein uS19.

It is found in the cytoplasm. Functionally, an accessory protein needed during the final step in the assembly of 30S ribosomal subunit, possibly for assembly of the head region. Essential for efficient processing of 16S rRNA. May be needed both before and after RbfA during the maturation of 16S rRNA. It has affinity for free ribosomal 30S subunits but not for 70S ribosomes. The polypeptide is Ribosome maturation factor RimM (Thermobifida fusca (strain YX)).